The following is a 324-amino-acid chain: Putative divalent cation/proton antiporter TMEM165 (324 aa).

The N-terminal stretch at 1–33 is a signal peptide; sequence MAAAAPGNGRASAPRLLLLFLVPLLWAPAAVRA. Residues 34–89 are Lumenal-facing; the sequence is GPDEDLSHRNKEPPAPAQQLQPQPVAVQGPEPARVEKIFTPAAPVHTNKEDPATQT. Residues 35–45 are compositionally biased toward basic and acidic residues; it reads PDEDLSHRNKE. The segment at 35–59 is disordered; sequence PDEDLSHRNKEPPAPAQQLQPQPVA. Positions 50-59 are enriched in low complexity; the sequence is AQQLQPQPVA. Residues 90–110 traverse the membrane as a helical segment; it reads NLGFIHAFVAAISVIIVSELG. The Cytoplasmic segment spans residues 111–126; the sequence is DKTFFIAAIMAMRYNR. Residues 127 to 147 form a helical membrane-spanning segment; sequence LTVLAGAMLALGLMTCLSVLF. Residues 148–151 are Lumenal-facing; the sequence is GYAT. The helical transmembrane segment at 152–172 threads the bilayer; that stretch reads TVIPRVYTYYVSTVLFAIFGI. The Cytoplasmic portion of the chain corresponds to 173–228; it reads RMLREGLKMSPDEGQEELEEVQAELKKKDEEFQRTKLLNGPGDVETGTSITVPQKK. Residues 184 to 211 adopt a coiled-coil conformation; the sequence is DEGQEELEEVQAELKKKDEEFQRTKLLN. The helical transmembrane segment at 229–249 threads the bilayer; the sequence is WLHFISPIFVQALTLTFLAEW. Residues 250–267 lie on the Lumenal side of the membrane; it reads GDRSQLTTIVLAAREDPY. The helical transmembrane segment at 268-288 threads the bilayer; that stretch reads GVAVGGTVGHCLCTGLAVIGG. Residues 289 to 299 lie on the Cytoplasmic side of the membrane; the sequence is RMIAQKISVRT. A helical membrane pass occupies residues 300–320; that stretch reads VTIIGGIVFLAFAFSALFISP. The Lumenal portion of the chain corresponds to 321-324; the sequence is DSGF.

Belongs to the GDT1 family. In terms of tissue distribution, ubiquitously expressed.

The protein localises to the golgi apparatus membrane. The enzyme catalyses Ca(2+)(in) + n H(+)(out) = Ca(2+)(out) + n H(+)(in). The catalysed reaction is Mn(2+)(in) + n H(+)(out) = Mn(2+)(out) + n H(+)(in). Functionally, putative divalent cation:proton antiporter that exchanges calcium or manganese ions for protons across the Golgi membrane. Mediates the reversible transport of calcium or manganese to the Golgi lumen driven by the proton gradient and possibly the membrane potential generated by V-ATPase. Provides calcium or manganese cofactors to resident Golgi enzymes and contributes to the maintenance of an acidic luminal Golgi pH required for proper functioning of the secretory pathway. Promotes Ca(2+) storage within the Golgi lumen of the mammary epithelial cells to be then secreted into milk. The transport mechanism and stoichiometry remains to be elucidated. This Homo sapiens (Human) protein is Putative divalent cation/proton antiporter TMEM165.